Here is a 71-residue protein sequence, read N- to C-terminus: Mitotic-spindle organizing protein 1 (71 aa).

Belongs to the MOZART1 family. As to quaternary structure, part of the gamma-tubulin complex.

The protein resides in the cytoplasm. The protein localises to the cytoskeleton. It is found in the microtubule organizing center. Its subcellular location is the spindle pole body. In terms of biological role, required for gamma-tubulin complex recruitment to the microtubule organizing center (MTOC). The chain is Mitotic-spindle organizing protein 1 from Aspergillus clavatus (strain ATCC 1007 / CBS 513.65 / DSM 816 / NCTC 3887 / NRRL 1 / QM 1276 / 107).